We begin with the raw amino-acid sequence, 990 residues long: Type III restriction-modification enzyme StyLTI Res subunit (990 aa).

Residues 50-545 are helicase-like domain; sequence NIDVKMETGT…GLRLPVDENG (496 aa). In terms of domain architecture, VRR-NUC spans 884–970; that stretch reads LLKYDYPQQV…RQNINVEFAE (87 aa). The tract at residues 913-937 is endonuclease domain; that stretch reads STTPDFVYRIERQDADSVYLLVETK.

It belongs to the type III restriction-modification system Res protein family. In terms of assembly, contains two different subunits: Res and Mod. The cofactor is Mg(2+). It depends on S-adenosyl-L-methionine as a cofactor.

It catalyses the reaction Endonucleolytic cleavage of DNA to give specific double-stranded fragments with terminal 5'-phosphates.. In terms of biological role, a type III restriction enzyme that recognizes 2 inversely oriented double-stranded sequences 5'-CAGAG-3' and cleaves DNA 25-27 base pairs downstream. After binding to one recognition site undergoes random one-dimensional diffusion along DNA until it collides with a stationary enzyme bound to the second DNA site, which is when DNA cleavage occurs. DNA restriction requires both the Res and Mod subunits. The polypeptide is Type III restriction-modification enzyme StyLTI Res subunit (Salmonella typhimurium (strain LT2 / SGSC1412 / ATCC 700720)).